The following is a 294-amino-acid chain: Glyceraldehyde-3-phosphate dehydrogenase (294 aa).

NAD(+)-binding residues include Asp19, Lys63, and Thr105. D-glyceraldehyde 3-phosphate is bound by residues 134–136 (SCT), Thr165, 194–195 (TG), and Arg217. Cys135 acts as the Nucleophile in catalysis.

Belongs to the glyceraldehyde-3-phosphate dehydrogenase family. In terms of assembly, homotetramer.

The protein localises to the cytoplasm. The enzyme catalyses D-glyceraldehyde 3-phosphate + phosphate + NAD(+) = (2R)-3-phospho-glyceroyl phosphate + NADH + H(+). Its pathway is carbohydrate degradation; glycolysis; pyruvate from D-glyceraldehyde 3-phosphate: step 1/5. Functionally, catalyzes the oxidative phosphorylation of glyceraldehyde 3-phosphate (G3P) to 1,3-bisphosphoglycerate (BPG) using the cofactor NAD. The first reaction step involves the formation of a hemiacetal intermediate between G3P and a cysteine residue, and this hemiacetal intermediate is then oxidized to a thioester, with concomitant reduction of NAD to NADH. The reduced NADH is then exchanged with the second NAD, and the thioester is attacked by a nucleophilic inorganic phosphate to produce BPG. The protein is Glyceraldehyde-3-phosphate dehydrogenase (gap) of Atlantibacter hermannii (Escherichia hermannii).